Reading from the N-terminus, the 124-residue chain is Splicing factor 3B subunit 6-like protein (124 aa).

Residues 16–29 (EVNRVLYVRNLPFN) form an interaction with pre-mRNA branch site region. Residues 19–94 (RVLYVRNLPF…RYLIVLYYQH (76 aa)) form the RRM domain.

It is found in the nucleus. Its function is as follows. May be necessary for the splicing of pre-mRNA. The sequence is that of Splicing factor 3B subunit 6-like protein from Arabidopsis thaliana (Mouse-ear cress).